A 248-amino-acid chain; its full sequence is MSGDLTRCLGKGSCPPGPVPEGVIRIYSMRFCPYSHRTRLVLKAKSIRHEIININLKNKPDWYYTKHPFGQVPVLENSQCQLIYESVIACEYLDDVFPGRKLFPYDPYERARQKMLLELFCKVPQLSKECLVALRCGRDCTDLKVALRQELCNLEEILEYQNTTFFGGDSISMIDYLVWPWFERLDVYGLADCVNHTPMLRLWISSMKQDPAVCALHIDKNIFLGFLNLYFQNNPCAFDFGLCGPIVR.

The GST N-terminal domain maps to 22–101; the sequence is GVIRIYSMRF…YLDDVFPGRK (80 aa). The active-site Nucleophile is the Cys32. Residues Lys59, Val72, and 85-86 contribute to the glutathione site; that span reads ES. The GST C-terminal domain occupies 106–231; sequence DPYERARQKM…IFLGFLNLYF (126 aa).

It belongs to the GST superfamily. Omega family.

It carries out the reaction RX + glutathione = an S-substituted glutathione + a halide anion + H(+). It catalyses the reaction L-dehydroascorbate + 2 glutathione = glutathione disulfide + L-ascorbate. The enzyme catalyses methylarsonate + 2 glutathione + H(+) = methylarsonous acid + glutathione disulfide + H2O. In terms of biological role, exhibits glutathione-dependent thiol transferase activity. Has high dehydroascorbate reductase activity and may contribute to the recycling of ascorbic acid. Participates in the biotransformation of inorganic arsenic and reduces monomethylarsonic acid (MMA). In Rattus norvegicus (Rat), this protein is Glutathione S-transferase omega-2 (Gsto2).